Consider the following 80-residue polypeptide: Venom protein HGE029 (80 aa).

The first 22 residues, Met-1–Ala-22, serve as a signal peptide directing secretion.

Belongs to the non-disulfide-bridged peptide (NDBP) superfamily. Long chain multifunctional peptide (group 2) family. In terms of tissue distribution, expressed by the venom gland.

The protein resides in the secreted. The polypeptide is Venom protein HGE029 (Hoffmannihadrurus gertschi (Scorpion)).